The following is a 264-amino-acid chain: SPRY domain-containing SOCS box protein 2 (264 aa).

Residues Met-1–Ala-18 show a composition bias toward polar residues. The disordered stretch occupies residues Met-1 to Cys-53. Residues Ser-21–Ser-34 are compositionally biased toward low complexity. Positions Pro-26–Arg-221 constitute a B30.2/SPRY domain. The 43-residue stretch at Ala-222–Lys-264 folds into the SOCS box domain.

The protein belongs to the SPSB family. As to quaternary structure, component of the probable ECS(SPSB2) E3 ubiquitin-protein ligase complex which contains CUL5, RNF7/RBX2, Elongin BC complex and SPSB2. Interacts with CUL5, RNF7, ELOB and ELOC. Interacts with MET. Interacts (via B30.2/SPRY domain) with PAWR; this interaction occurs in association with the Elongin BC complex. Interacts with NOS2.

It is found in the cytoplasm. The protein localises to the cytosol. It functions in the pathway protein modification; protein ubiquitination. Substrate recognition component of a SCF-like ECS (Elongin BC-CUL2/5-SOCS-box protein) E3 ubiquitin-protein ligase complex which mediates the ubiquitination and subsequent proteasomal degradation of target proteins. Negatively regulates nitric oxide (NO) production and limits cellular toxicity in activated macrophages by mediating the ubiquitination and proteasomal degradation of NOS2. Acts as a bridge which links NOS2 with the ECS E3 ubiquitin ligase complex components ELOC and CUL5. This chain is SPRY domain-containing SOCS box protein 2 (Spsb2), found in Rattus norvegicus (Rat).